The chain runs to 146 residues: Cystatin-C (146 aa).

The signal sequence occupies residues 1–26; sequence MAGPLRAPLLLLAILAVALAVSPAAG. Residue Ser-43 is modified to Phosphoserine. The short motif at 81-85 is the Secondary area of contact element; it reads QIVAG. 2 cysteine pairs are disulfide-bonded: Cys-99–Cys-109 and Cys-123–Cys-143.

This sequence belongs to the cystatin family.

The protein resides in the secreted. Its function is as follows. As an inhibitor of cysteine proteinases, this protein is thought to serve an important physiological role as a local regulator of this enzyme activity. The sequence is that of Cystatin-C (CST3) from Macaca mulatta (Rhesus macaque).